Consider the following 429-residue polypeptide: 3-phosphoshikimate 1-carboxyvinyltransferase (429 aa).

3-phosphoshikimate contacts are provided by K11, S12, and R16. Phosphoenolpyruvate is bound at residue K11. G82 and R110 together coordinate phosphoenolpyruvate. 4 residues coordinate 3-phosphoshikimate: S155, Q157, D302, and K329. Q157 is a phosphoenolpyruvate binding site. D302 acts as the Proton acceptor in catalysis. The phosphoenolpyruvate site is built by R333 and R385.

Belongs to the EPSP synthase family. Monomer.

Its subcellular location is the cytoplasm. It catalyses the reaction 3-phosphoshikimate + phosphoenolpyruvate = 5-O-(1-carboxyvinyl)-3-phosphoshikimate + phosphate. It participates in metabolic intermediate biosynthesis; chorismate biosynthesis; chorismate from D-erythrose 4-phosphate and phosphoenolpyruvate: step 6/7. Catalyzes the transfer of the enolpyruvyl moiety of phosphoenolpyruvate (PEP) to the 5-hydroxyl of shikimate-3-phosphate (S3P) to produce enolpyruvyl shikimate-3-phosphate and inorganic phosphate. In Helicobacter pylori (strain ATCC 700392 / 26695) (Campylobacter pylori), this protein is 3-phosphoshikimate 1-carboxyvinyltransferase.